Consider the following 426-residue polypeptide: MILIRNVRLVDAMGERGPLDVLIGEGRILSLEGGEAKQVVDGTGCFLAPGFLDLHAHLREPGEEVKEDLFSGLLAAVRGGYTDLVSMPNTNPPVDTPEAVRALKEKAKALGLARLHPAAALTEKQEGKTLTPAGLLQEAGAVLLTDDGRTNEDAGVLAAGLLMAAPLGLPVAVHAEDAGLRRNGVMNDGPLADLLGLPGNPPEAEAARIARDLEVLRYALRRSPATPRLHVQHLSTKRGLELVREAKRAGLPVTAEATPHHLTLTEEALRTFDPLFKVAPPLRGEEDREALLEGLLDGTLDAIATDHAPHTQAEKEMDLLRAPFGIPSLEVAFPLLYTELHLKRGFPLRRLVELFTDGPRRVLGLPPLHLEEGTEASLVLLDPKERPVDPQGFASKARFSPWTGWRLGGWPVLTLVEGRIVHEALE.

His-55 and His-57 together coordinate Zn(2+). Substrate-binding positions include 57–59 and Asn-89; that span reads HLR. 4 residues coordinate Zn(2+): Asp-147, His-174, His-233, and Asp-306. Asp-306 is a catalytic residue. Substrate-binding positions include His-310 and 324–325; that span reads FG.

The protein belongs to the metallo-dependent hydrolases superfamily. DHOase family. Class I DHOase subfamily. Zn(2+) serves as cofactor.

It carries out the reaction (S)-dihydroorotate + H2O = N-carbamoyl-L-aspartate + H(+). It participates in pyrimidine metabolism; UMP biosynthesis via de novo pathway; (S)-dihydroorotate from bicarbonate: step 3/3. Its function is as follows. Catalyzes the reversible cyclization of carbamoyl aspartate to dihydroorotate. This is Dihydroorotase from Thermus aquaticus.